Consider the following 104-residue polypeptide: Pyrimidine/purine nucleoside phosphorylase (104 aa).

This sequence belongs to the nucleoside phosphorylase PpnP family.

It catalyses the reaction a purine D-ribonucleoside + phosphate = a purine nucleobase + alpha-D-ribose 1-phosphate. It carries out the reaction adenosine + phosphate = alpha-D-ribose 1-phosphate + adenine. The enzyme catalyses cytidine + phosphate = cytosine + alpha-D-ribose 1-phosphate. The catalysed reaction is guanosine + phosphate = alpha-D-ribose 1-phosphate + guanine. It catalyses the reaction inosine + phosphate = alpha-D-ribose 1-phosphate + hypoxanthine. It carries out the reaction thymidine + phosphate = 2-deoxy-alpha-D-ribose 1-phosphate + thymine. The enzyme catalyses uridine + phosphate = alpha-D-ribose 1-phosphate + uracil. The catalysed reaction is xanthosine + phosphate = alpha-D-ribose 1-phosphate + xanthine. In terms of biological role, catalyzes the phosphorolysis of diverse nucleosides, yielding D-ribose 1-phosphate and the respective free bases. Can use uridine, adenosine, guanosine, cytidine, thymidine, inosine and xanthosine as substrates. Also catalyzes the reverse reactions. The protein is Pyrimidine/purine nucleoside phosphorylase of Leptospira borgpetersenii serovar Hardjo-bovis (strain L550).